Here is a 453-residue protein sequence, read N- to C-terminus: Bestrophin homolog 5 (453 aa).

4 helical membrane passes run 78–98 (ELIV…FALT), 113–133 (DARM…NIII), 275–295 (IPLM…FLCI), and 314–334 (LYIP…LKVA).

The protein belongs to the anion channel-forming bestrophin (TC 1.A.46) family. Calcium-sensitive chloride channel subfamily. As to quaternary structure, forms oligomers.

It is found in the cell membrane. Its function is as follows. Forms chloride channels. The chain is Bestrophin homolog 5 (best-5) from Caenorhabditis elegans.